We begin with the raw amino-acid sequence, 235 residues long: Small ribosomal subunit protein eS4 (235 aa).

The S4 RNA-binding domain maps to 38-101 (IPLLVLVRDF…EKSYRILFDE (64 aa)).

It belongs to the eukaryotic ribosomal protein eS4 family.

The chain is Small ribosomal subunit protein eS4 (rps4e) from Archaeoglobus fulgidus (strain ATCC 49558 / DSM 4304 / JCM 9628 / NBRC 100126 / VC-16).